The chain runs to 431 residues: Serine--tRNA ligase (431 aa).

235-237 (TAE) serves as a coordination point for L-serine. Residues 266-268 (RRE) and valine 282 contribute to the ATP site. Glutamate 289 is a binding site for L-serine. Residue 353–356 (EASS) participates in ATP binding. L-serine is bound at residue serine 389.

This sequence belongs to the class-II aminoacyl-tRNA synthetase family. Type-1 seryl-tRNA synthetase subfamily. In terms of assembly, homodimer. The tRNA molecule binds across the dimer.

Its subcellular location is the cytoplasm. The catalysed reaction is tRNA(Ser) + L-serine + ATP = L-seryl-tRNA(Ser) + AMP + diphosphate + H(+). It carries out the reaction tRNA(Sec) + L-serine + ATP = L-seryl-tRNA(Sec) + AMP + diphosphate + H(+). It functions in the pathway aminoacyl-tRNA biosynthesis; selenocysteinyl-tRNA(Sec) biosynthesis; L-seryl-tRNA(Sec) from L-serine and tRNA(Sec): step 1/1. In terms of biological role, catalyzes the attachment of serine to tRNA(Ser). Is also able to aminoacylate tRNA(Sec) with serine, to form the misacylated tRNA L-seryl-tRNA(Sec), which will be further converted into selenocysteinyl-tRNA(Sec). This Pelodictyon phaeoclathratiforme (strain DSM 5477 / BU-1) protein is Serine--tRNA ligase.